A 159-amino-acid chain; its full sequence is MKVLIGSDKSGFGLKEEVKAYLAGKGYEMTDCGTLDPEQPKPFFEAAPIAAQKIQSGEFERAILICGTGMGMAIVANKFEGVYAACCESTYAAEKCRAINDANILTMGGWIIAGILGCEMAETFLTTGFTENLEEWRQEFLKGAKQKVGAIEESIYRKG.

The active-site Proton acceptor is C66.

It belongs to the LacAB/RpiB family.

It carries out the reaction 4-deoxy-4-sulfo-D-erythrose = 4-deoxy-4-sulfo-D-erythrulose. Its function is as follows. Part of the sulfo-TK pathway, a D-sulfoquinovose degradation pathway that produces 2-hydroxyethane-1-sulfonate (isethionate). Catalyzes the isomerization of 4-deoxy-4-sulfo-D-erythrose (SE) to 4-deoxy-4-sulfo-D-erythrulose (SEu). This chain is 4-deoxy-4-sulfo-D-erythrose isomerase, found in Clostridium sp. (strain MSTE9).